Here is a 320-residue protein sequence, read N- to C-terminus: 1-aminocyclopropane-1-carboxylate oxidase 2 (320 aa).

Positions 111-143 form a coiled coil; sequence DEYRTAMKDFGKRLENLAEDLLDLLCENLGLEK. A Fe2OG dioxygenase domain is found at 156-256; that stretch reads PTFGTKVSNY…RMSVASFYNP (101 aa). Fe cation contacts are provided by histidine 180, aspartate 182, and histidine 237. Residue arginine 247 participates in 2-oxoglutarate binding.

This sequence belongs to the iron/ascorbate-dependent oxidoreductase family. Fe(2+) serves as cofactor. It depends on Cu(2+) as a cofactor. In terms of tissue distribution, expressed in vegetative tissues. Constitutively expressed in leaves and blades. In ethylene exposed etiolated seedlings, localized in cells at the outer side of the exaggerated hook in an ethylene-dependent manner and following an ethylene sensitive pattern. Also detected in the root tip when treated by ethylene.

The catalysed reaction is 1-aminocyclopropane-1-carboxylate + L-ascorbate + O2 = ethene + L-dehydroascorbate + hydrogen cyanide + CO2 + 2 H2O. The protein operates within alkene biosynthesis; ethylene biosynthesis via S-adenosyl-L-methionine; ethylene from S-adenosyl-L-methionine: step 2/2. Enzyme involved in the ethylene biosynthesis. Required to mediate the 1-aminocyclopropane-1-carboxylic acid (ACC)-mediated reversion of the ABA-induced inhibition of seed germination via endosperm rupture. May promote stem elongation by maximizing the extensibility cells, possibly by activating ethylene biosynthesis, in response to very-long-chain fatty acids (VLCFAs C20:0 to C30:0). In Arabidopsis thaliana (Mouse-ear cress), this protein is 1-aminocyclopropane-1-carboxylate oxidase 2 (ACO2).